A 493-amino-acid chain; its full sequence is UDP-N-acetylmuramoyl-L-alanyl-D-glutamate--2,6-diaminopimelate ligase (493 aa).

Position 30 (serine 30) interacts with UDP-N-acetyl-alpha-D-muramoyl-L-alanyl-D-glutamate. 114 to 120 (GTNGKTS) is an ATP binding site. Residues 156–157 (TT), serine 183, glutamine 189, and arginine 191 each bind UDP-N-acetyl-alpha-D-muramoyl-L-alanyl-D-glutamate. An N6-carboxylysine modification is found at lysine 223. Meso-2,6-diaminopimelate is bound by residues arginine 386, 410–413 (DNPR), glycine 460, and glutamate 464. The Meso-diaminopimelate recognition motif signature appears at 410 to 413 (DNPR).

The protein belongs to the MurCDEF family. MurE subfamily. The cofactor is Mg(2+). Carboxylation is probably crucial for Mg(2+) binding and, consequently, for the gamma-phosphate positioning of ATP.

The protein resides in the cytoplasm. It catalyses the reaction UDP-N-acetyl-alpha-D-muramoyl-L-alanyl-D-glutamate + meso-2,6-diaminopimelate + ATP = UDP-N-acetyl-alpha-D-muramoyl-L-alanyl-gamma-D-glutamyl-meso-2,6-diaminopimelate + ADP + phosphate + H(+). Its pathway is cell wall biogenesis; peptidoglycan biosynthesis. Catalyzes the addition of meso-diaminopimelic acid to the nucleotide precursor UDP-N-acetylmuramoyl-L-alanyl-D-glutamate (UMAG) in the biosynthesis of bacterial cell-wall peptidoglycan. In Chromobacterium violaceum (strain ATCC 12472 / DSM 30191 / JCM 1249 / CCUG 213 / NBRC 12614 / NCIMB 9131 / NCTC 9757 / MK), this protein is UDP-N-acetylmuramoyl-L-alanyl-D-glutamate--2,6-diaminopimelate ligase.